A 280-amino-acid chain; its full sequence is uncharacterized protein (280 aa).

The protein belongs to the eukaryotic-type primase small subunit family.

This is an uncharacterized protein from Archaeoglobus fulgidus (strain ATCC 49558 / DSM 4304 / JCM 9628 / NBRC 100126 / VC-16).